We begin with the raw amino-acid sequence, 335 residues long: Mitochondrial amidoxime reducing component 2 (335 aa).

The transit peptide at 1–35 directs the protein to the mitochondrion; that stretch reads MGASSSSALARLGLPARPWPRWLGVAALGLAAVAL. Residues lysine 59, lysine 138, and lysine 144 each participate in a glycyl lysine isopeptide (Lys-Gly) (interchain with G-Cter in ubiquitin) cross-link. At lysine 156 the chain carries N6-acetyllysine; alternate. Residue lysine 156 forms a Glycyl lysine isopeptide (Lys-Gly) (interchain with G-Cter in ubiquitin); alternate linkage. Glycyl lysine isopeptide (Lys-Gly) (interchain with G-Cter in ubiquitin) cross-links involve residues lysine 166, lysine 173, lysine 187, lysine 287, and lysine 294. The region spanning 188–334 is the MOSC domain; sequence GRTSRKLLPT…LRVGDPVYRM (147 aa).

In terms of assembly, component of a complex composed of cytochrome b5, NADH-cytochrome b5 reductase (CYB5R3) and MTARC2. Requires Mo-molybdopterin as cofactor. Post-translationally, ubiquitinated by PRKN during mitophagy, leading to its degradation and enhancement of mitophagy. Deubiquitinated by USP30.

It is found in the mitochondrion outer membrane. The protein resides in the peroxisome. It carries out the reaction N(omega)-hydroxy-L-arginine + 2 Fe(II)-[cytochrome b5] + 2 H(+) = L-arginine + 2 Fe(III)-[cytochrome b5] + H2O. Catalyzes the reduction of N-oxygenated molecules, acting as a counterpart of cytochrome P450 and flavin-containing monooxygenases in metabolic cycles. As a component of prodrug-converting system, reduces a multitude of N-hydroxylated prodrugs particularly amidoximes, leading to increased drug bioavailability. May be involved in mitochondrial N(omega)-hydroxy-L-arginine (NOHA) reduction, regulating endogenous nitric oxide levels and biosynthesis. Postulated to cleave the N-OH bond of N-hydroxylated substrates in concert with electron transfer from NADH to cytochrome b5 reductase then to cytochrome b5, the ultimate electron donor that primes the active site for substrate reduction. The polypeptide is Mitochondrial amidoxime reducing component 2 (Homo sapiens (Human)).